The following is a 3746-amino-acid chain: N-(5-amino-5-carboxypentanoyl)-L-cysteinyl-D-valine synthase (3746 aa).

Residues 299 to 711 (EEVVERHEDK…GRADFQIKLR (413 aa)) form an adenylation (A) domain 1 region. Positions 818–895 (DLRGDTEIAL…RMADLLQNKQ (78 aa)) constitute a Carrier 1 domain. Position 855 is an O-(pantetheine 4'-phosphoryl)serine (S855). The condensation (C) domain 1 stretch occupies residues 918–1372 (NIYLANSLQQ…YLSSIQLEQL (455 aa)). Positions 1391–1801 (FENEASQKPD…GRNDFQVKIR (411 aa)) are adenylation (A) domain 2. In terms of domain architecture, Carrier 2 spans 1902–1979 (PPRSEIERSL…AQTHLILNDA (78 aa)). An O-(pantetheine 4'-phosphoryl)serine modification is found at S1939. Residues 1994–2434 (QMIPVSRAQE…SELSAEGINE (441 aa)) are condensation (C) domain 2. Residues 2478–2883 (AFLAAEKIAV…GRGDLQIKMR (406 aa)) form an adenylation (A) domain 3 region. In terms of domain architecture, Carrier 3 spans 2991 to 3066 (PPRNIIEAKM…ALHDHVFMKD (76 aa)). S3026 carries the O-(pantetheine 4'-phosphoryl)serine modification. Residues 3084-3500 (GEAPLLPIQD…NKILDGRASQ (417 aa)) are epimerase (E) domain. The interval 3530 to 3732 (TLFLLPPGEG…FSWVGNPQQV (203 aa)) is thioesterase (TE) domain.

Belongs to the NRP synthetase family. Pantetheine 4'-phosphate serves as cofactor. It depends on Mg(2+) as a cofactor.

Its subcellular location is the cytoplasm. It is found in the cytosol. The protein resides in the vacuole membrane. It carries out the reaction L-2-aminoadipate + L-valine + L-cysteine + 3 ATP + H2O = N-[(5S)-5-amino-5-carboxypentanoyl]-L-cysteinyl-D-valine + 3 AMP + 3 diphosphate + 3 H(+). The protein operates within antibiotic biosynthesis; penicillin G biosynthesis; penicillin G from L-alpha-aminoadipate and L-cysteine and L-valine: step 1/3. Its function is as follows. Nonribosomal peptide synthetase; part of the gene cluster that mediates the biosynthesis of penicillin, the world's most important antibiotic. The trimodular NRPS acvA produces the tripeptide N-[(5S)-5-amino-5-carboxypentanoyl]-L-cysteinyl-D-valine (LLD-ACV or ACV) via condensation of the 3 residues L-2-aminoadipate, L-cysteine and L-valine. The precursor amino acids for penicillin biosynthesis are withdrawn from the vacuolar amino acid pool by the MFS-type transporter penV. Each of the constituent amino acids of the tripeptide ACV are activated as aminoacyl-adenylates with peptide bonds formed through the participation of amino acid thioester intermediates. The penicillin biosynthesis occurs via 3 enzymatic steps, the first corresponding to the production of the tripeptide N-[(5S)-5-amino-5-carboxypentanoyl]-L-cysteinyl-D-valine (LLD-ACV or ACV) by the NRPS acvA. The tripeptide ACV is then cyclized to isopenicillin N (IPN) by the isopenicillin N synthase ipnA that forms the beta-lactam nucleus. Finally, the alpha-aminoadipyl side chain is exchanged for phenylacetic acid by the isopenicillin N acyltransferase aatA to yield penicillin in the peroxisomal matrix. The protein is N-(5-amino-5-carboxypentanoyl)-L-cysteinyl-D-valine synthase of Penicillium chrysogenum (Penicillium notatum).